The sequence spans 957 residues: Glycine dehydrogenase (decarboxylating) (957 aa).

Lysine 708 carries the N6-(pyridoxal phosphate)lysine modification.

It belongs to the GcvP family. In terms of assembly, the glycine cleavage system is composed of four proteins: P, T, L and H. It depends on pyridoxal 5'-phosphate as a cofactor.

The enzyme catalyses N(6)-[(R)-lipoyl]-L-lysyl-[glycine-cleavage complex H protein] + glycine + H(+) = N(6)-[(R)-S(8)-aminomethyldihydrolipoyl]-L-lysyl-[glycine-cleavage complex H protein] + CO2. The glycine cleavage system catalyzes the degradation of glycine. The P protein binds the alpha-amino group of glycine through its pyridoxal phosphate cofactor; CO(2) is released and the remaining methylamine moiety is then transferred to the lipoamide cofactor of the H protein. The chain is Glycine dehydrogenase (decarboxylating) from Escherichia coli O81 (strain ED1a).